An 881-amino-acid polypeptide reads, in one-letter code: Valine--tRNA ligase (881 aa).

The short motif at 42 to 52 (PNITGDLHVGH) is the 'HIGH' region element. The 'KMSKS' region signature appears at 554–558 (KMSKS). Lys-557 is an ATP binding site.

Belongs to the class-I aminoacyl-tRNA synthetase family. ValS type 1 subfamily. As to quaternary structure, monomer.

The protein resides in the cytoplasm. It carries out the reaction tRNA(Val) + L-valine + ATP = L-valyl-tRNA(Val) + AMP + diphosphate. Functionally, catalyzes the attachment of valine to tRNA(Val). As ValRS can inadvertently accommodate and process structurally similar amino acids such as threonine, to avoid such errors, it has a 'posttransfer' editing activity that hydrolyzes mischarged Thr-tRNA(Val) in a tRNA-dependent manner. The polypeptide is Valine--tRNA ligase (Wigglesworthia glossinidia brevipalpis).